A 548-amino-acid polypeptide reads, in one-letter code: Probable malate:quinone oxidoreductase (548 aa).

Residues 520–548 (YDRPQAADSTPKPQLKPQPVQKEVADIAL) are disordered. Residues 530–541 (PKPQLKPQPVQK) are compositionally biased toward low complexity.

It belongs to the MQO family. It depends on FAD as a cofactor.

It catalyses the reaction (S)-malate + a quinone = a quinol + oxaloacetate. It participates in carbohydrate metabolism; tricarboxylic acid cycle; oxaloacetate from (S)-malate (quinone route): step 1/1. The sequence is that of Probable malate:quinone oxidoreductase from Shigella dysenteriae serotype 1 (strain Sd197).